The primary structure comprises 129 residues: uncharacterized protein (129 aa).

A helical transmembrane segment spans residues 103 to 125 (AISSAFQYGLSTSNFFFIFLYIF).

The protein localises to the membrane. This is an uncharacterized protein from Acanthamoeba polyphaga (Amoeba).